Here is a 302-residue protein sequence, read N- to C-terminus: MPQSALFTGIIPPVSTIFTADGQLDKPGTAALIDDLIKAGVDGLFFLGSGGEFSQLGAEERKAIARFAIDHVDRRVPVLIGTGGTNARETIELSQHAQQAGADGIVVINPYYWKVSEANLIRYFEQVADSVTLPVMLYNFPALTGQDLTPALVKTLADSRSNIIGIKDTIDSVAHLRSMIHTVKGAHPHFTVLCGYDDHLFNTLLLGGDGAISASGNFAPQVSVNLLKAWRDGDVAKAAGYHQTLLQIPQMYQLDTPFVNVIKEAIVLCGRPVSTHVLPPASPLDEPRKAQLKTLLQQLKLC.

Catalysis depends on charge relay system residues S49 and Y112. Y138 functions as the Proton donor in the catalytic mechanism. K167 serves as the catalytic Schiff-base intermediate with substrate.

It belongs to the DapA family. In terms of assembly, a dimer of dimers.

The protein localises to the cytoplasm. The catalysed reaction is 2-dehydro-3-deoxy-D-gluconate = D-glyceraldehyde + pyruvate. The enzyme catalyses 2-dehydro-3-deoxy-D-arabinonate = glycolaldehyde + pyruvate. In terms of biological role, catalyzes the formation of 2-keto-3-deoxy-gluconate (KDG) from pyruvate and glyceraldehyde. May also function as a 2-dehydro-3-deoxy-D-pentonate aldolase. Overexpression leads to increased growth (over 2 hours) in the presence of the antibiotics norfloxacin, ampicillin and streptomycin. This Escherichia coli (strain K12) protein is Putative 2-dehydro-3-deoxy-D-gluconate aldolase YagE (yagE).